Here is a 183-residue protein sequence, read N- to C-terminus: Helofensin-1 (183 aa).

A signal peptide spans 1 to 26; it reads MQMDWLFIAVVSAIGLLSSGVPGTQG. One copy of the C(6)C(4)C(9)C(6)CC 1; approximate repeat lies at 27-64; sequence AYTTEQCRALNGTCRFYACFPKNVVIGKCDWLGWGCCA. The C(6)C(4)C(9)C(6)CC 2; approximate repeat unit spans residues 65-101; sequence RTPLERCTAKKGTCTASGCTETDTDHGPCDGGAQCCQ. Residues 102 to 139 form a C(6)C(4)C(9)C(6)CC 3; approximate repeat; that stretch reads RDPVKYCKFHGNVCGRGKCPMDHIPIGEQCMPGYPCCK. The C(6)C(4)C(9)C(6)CC 4; approximate repeat unit spans residues 140–177; the sequence is RDGPAYCKSKGGKCLRRCSQIVPTDIIGVCADGVPCCK.

Belongs to the beta-defensin family. Helofensin subfamily. Expressed by the mandibular venom gland.

The protein resides in the secreted. In terms of biological role, lethal toxin which possesses an inhibitory effect on direct electrical stimulation of the isolated hemi-diaphragm of mice. Neither hemorrhagic nor hemolytic activities are detected. Phospholipase A2 activity, proteolytic activity and arginine esterolytic activity are absent. This Heloderma suspectum cinctum (Banded Gila monster) protein is Helofensin-1.